The chain runs to 382 residues: Galactokinase (382 aa).

Glutamate 34–aspartate 37 contributes to the substrate binding site. Residue glycine 124–serine 130 coordinates ATP. 2 residues coordinate Mg(2+): serine 130 and glutamate 162. The active-site Proton acceptor is the aspartate 174. Tyrosine 223 contributes to the substrate binding site.

The protein belongs to the GHMP kinase family. GalK subfamily.

It localises to the cytoplasm. It carries out the reaction alpha-D-galactose + ATP = alpha-D-galactose 1-phosphate + ADP + H(+). Its pathway is carbohydrate metabolism; galactose metabolism. Catalyzes the transfer of the gamma-phosphate of ATP to D-galactose to form alpha-D-galactose-1-phosphate (Gal-1-P). This is Galactokinase from Aeromonas hydrophila subsp. hydrophila (strain ATCC 7966 / DSM 30187 / BCRC 13018 / CCUG 14551 / JCM 1027 / KCTC 2358 / NCIMB 9240 / NCTC 8049).